We begin with the raw amino-acid sequence, 429 residues long: Sex determination protein fox-1 (429 aa).

Residues 156–180 show a composition bias toward low complexity; it reads ATTAGSTNGSAAVTQPDPSTSSGPD. Residues 156 to 188 are disordered; sequence ATTAGSTNGSAAVTQPDPSTSSGPDGPKRLHVS. In terms of domain architecture, RRM spans 183-259; it reads KRLHVSNIPF…RKIEVNCATA (77 aa).

As to quaternary structure, interacts with sup-12. In terms of tissue distribution, in males and hermaphrodites expressed in a subset of cells in the head and tail. Expressed in the pharynx, intestine and in muscles from the vulva and body wall.

The protein resides in the nucleus. Its function is as follows. RNA-binding protein that regulates tissue-specific alternative splicing events by binding to 5'-UGCAUG-3' and 5'-GCACG-3' elements. Also binds to poly(A), poly(G), poly(C), or poly(U) stretches of RNA. Plays a role in the sex determination pathway and X chromosome dosage compensation, and together with sex-1 is involved in making the distinction between one and two X-chromosomes. Binds to 5'-GCAUG-3' and 5'-GCACG-3' elements in intron 6 of the pre-mRNA of the sex-determining factor xol-1 to promote its alternative splicing and together with sex-1 negatively regulates the expression of xol-1 to promote hermaphrodite development. Negatively regulates the expression of the active isoform of xol-1 (isoform b) by promoting intron 6 retention and the deletion of exon 7 coding sequences in hermaphrodite embryos. Furthermore, binding to the pre-mRNA of xol-1 can also direct the use of an alternative 3' splice site enabling the xol-1 transcript to be trans-spliced to unrelated genes on chromosome 2, which also leads to xol-1 exon 7 deletion. Does not seem to regulate the retention of introns 1 to 5 of xol-1 pre-mRNA. Plays a role in the association of the dosage compensation complex proteins dpy-27 and sdc-3 with the hermaphrodite X chromosomes. Binds to 5'-UGCAUG-3' elements in intron 7 of the pre-mRNA of unc-32 to promote its alternative splicing in neuronal tissues. Binds to 5'-UGCAUG-3' elements in intron 4 of the pre-mRNA of egl-15 to promote its alternative splicing in body wall muscle tissues. Promotes binding of RNA-binding protein sup-12 to target RNA. Plays a role in male mating behavior. This is Sex determination protein fox-1 from Caenorhabditis elegans.